Reading from the N-terminus, the 313-residue chain is Probable pyridoxal 5'-phosphate synthase subunit PDX1.2 (313 aa).

Asp-42 lines the D-ribose 5-phosphate pocket. Residue Lys-99 is the Schiff-base intermediate with D-ribose 5-phosphate of the active site. D-ribose 5-phosphate is bound at residue Gly-171. Arg-183 is a binding site for D-glyceraldehyde 3-phosphate. D-ribose 5-phosphate-binding positions include Gly-232 and 253 to 254 (GS).

The protein belongs to the PdxS/SNZ family.

It catalyses the reaction aldehydo-D-ribose 5-phosphate + D-glyceraldehyde 3-phosphate + L-glutamine = pyridoxal 5'-phosphate + L-glutamate + phosphate + 3 H2O + H(+). The protein operates within cofactor biosynthesis; pyridoxal 5'-phosphate biosynthesis. Catalyzes the formation of pyridoxal 5'-phosphate from ribose 5-phosphate (RBP), glyceraldehyde 3-phosphate (G3P) and ammonia. The ammonia is provided by PDX2. Can also use ribulose 5-phosphate and dihydroxyacetone phosphate as substrates, resulting from enzyme-catalyzed isomerization of RBP and G3P, respectively. Also plays an indirect role in resistance to singlet oxygen-generating photosensitizers. The polypeptide is Probable pyridoxal 5'-phosphate synthase subunit PDX1.2 (PDX12) (Oryza sativa subsp. japonica (Rice)).